A 689-amino-acid chain; its full sequence is UvrABC system protein C (689 aa).

Residues 1–19 show a composition bias toward polar residues; the sequence is MTSDSSDTAKQIGSGQPSG. The disordered stretch occupies residues 1 to 59; sequence MTSDSSDTAKQIGSGQPSGSPADMRRRDGVAPEQEVDPASLETDEDDEARLPDLPDEPV. Acidic residues predominate over residues 42–59; the sequence is ETDEDDEARLPDLPDEPV. The 79-residue stretch at 83–161 folds into the GIY-YIG domain; it reads TSPGVYRMMN…IKQLRPRFNV (79 aa). A UVR domain is found at 271–306; that stretch reads RAVKEDLARAMEQAAADLAFERAALYRDRLAALSAI.

Belongs to the UvrC family. Interacts with UvrB in an incision complex.

The protein localises to the cytoplasm. Functionally, the UvrABC repair system catalyzes the recognition and processing of DNA lesions. UvrC both incises the 5' and 3' sides of the lesion. The N-terminal half is responsible for the 3' incision and the C-terminal half is responsible for the 5' incision. The polypeptide is UvrABC system protein C (Nitrobacter winogradskyi (strain ATCC 25391 / DSM 10237 / CIP 104748 / NCIMB 11846 / Nb-255)).